An 81-amino-acid polypeptide reads, in one-letter code: Sulfur carrier protein TusA (81 aa).

The active-site Cysteine persulfide intermediate is Cys-19.

Belongs to the sulfur carrier protein TusA family. As to quaternary structure, interacts with IscS.

It is found in the cytoplasm. The protein operates within tRNA modification. Sulfur carrier protein involved in sulfur trafficking in the cell. Part of a sulfur-relay system required for 2-thiolation during synthesis of 2-thiouridine of the modified wobble base 5-methylaminomethyl-2-thiouridine (mnm(5)s(2)U) in tRNA. Interacts with IscS and stimulates its cysteine desulfurase activity. Accepts an activated sulfur from IscS, which is then transferred to TusD, and thus determines the direction of sulfur flow from IscS to 2-thiouridine formation. Also appears to be involved in sulfur transfer for the biosynthesis of molybdopterin. The protein is Sulfur carrier protein TusA of Klebsiella pneumoniae subsp. pneumoniae (strain ATCC 700721 / MGH 78578).